The chain runs to 63 residues: Small ribosomal subunit protein uS14 (63 aa).

Cys26, Cys29, Cys42, and Cys45 together coordinate Zn(2+).

This sequence belongs to the universal ribosomal protein uS14 family. Zinc-binding uS14 subfamily. In terms of assembly, part of the 30S ribosomal subunit. Contacts proteins S3 and S10. Zn(2+) is required as a cofactor.

Binds 16S rRNA, required for the assembly of 30S particles and may also be responsible for determining the conformation of the 16S rRNA at the A site. The sequence is that of Small ribosomal subunit protein uS14 from Gloeobacter violaceus (strain ATCC 29082 / PCC 7421).